A 719-amino-acid polypeptide reads, in one-letter code: IVVERDPIRTSFEKWAKPGHFSRTLAKGPNTTTWIWNLHADAHDFGSHTNDLEEISRKVFSAHFGQLAIIFIWLSGMYFHGARFSNYEAWLSDPTHIKPSAQVVWPIVGQEILNGDVGGGSRGIQITSGLFQLWRASGITSELQLYCTAIGALIFAALMLFAGWFHYHKAAPKLAWFQDVESMLNHHLAGLLGIGSLSWAGHQVHVSLPINQLLDAGVDPKEIPLPHEFILNRDLLAQLYPSFAEGLTPLFTLNWSEYSEFLTFRGGLNPVTGGLWLTDTAHHHLAIAILFLIAGHMYRTNWGIGHSLKEILEAHKGPFTGEGHKGLYEILTTSWHAQLALNLAMLGSLTIVVAHHMYSMPPYPYLAIDYGTQLSLFTHHMWIGGFLIVGAAAHAAIFMVRDYDPTTQYNNLLDRVLRHRDAIVSHLNWACIFLGFHSFGLYIHNDTMSALGRPQDMFSDTAIQLQPIFAQWVQNTHALAPGSTAPDATASTSVTWGGGDLVAVGGKVALLPIPLGTADFLVHHIHAFTIHVTVLILLKGVLFARSSRLIPDKANLGFRFPCDGPGRGGTCQVSAWDHVFLGLFWMYNAISVVIFHFSWKMQSDVWGSISDQGMVTHITGGNFAQSSITINGWLRDFLWAQASQVIQSYGSSLSAYGLLFLGAHFVWAFSLMFLFSGRGYWQELIESIVWAHNKLEVAPVIQPRALSIVQGRAVGVAHY.

8 consecutive transmembrane segments (helical) span residues 59-82 (VFSA…FHGA), 145-168 (LYCT…FHYH), 184-208 (LNHH…HVSL), 280-298 (TAHH…GHMY), 335-358 (WHAQ…HHMY), 374-400 (LSLF…IFMV), 422-444 (AIVS…LYIH), and 520-538 (FLVH…LILL). Positions 562 and 571 each coordinate [4Fe-4S] cluster. Helical transmembrane passes span 578–599 (HVFL…HFSW) and 653–675 (LSAY…MFLF). A chlorophyll a'-binding site is contributed by His664. Residues Met672 and Tyr680 each coordinate chlorophyll a. Position 681 (Trp681) interacts with phylloquinone. Residues 713 to 719 (AVGVAHY) form a helical membrane-spanning segment.

The protein belongs to the PsaA/PsaB family. As to quaternary structure, the PsaA/B heterodimer binds the P700 chlorophyll special pair and subsequent electron acceptors. PSI consists of a core antenna complex that captures photons, and an electron transfer chain that converts photonic excitation into a charge separation. The eukaryotic PSI reaction center is composed of at least 11 subunits. It depends on P700 is a chlorophyll a/chlorophyll a' dimer, A0 is one or more chlorophyll a, A1 is one or both phylloquinones and FX is a shared 4Fe-4S iron-sulfur center. as a cofactor.

The protein localises to the plastid. The protein resides in the chloroplast thylakoid membrane. The enzyme catalyses reduced [plastocyanin] + hnu + oxidized [2Fe-2S]-[ferredoxin] = oxidized [plastocyanin] + reduced [2Fe-2S]-[ferredoxin]. In terms of biological role, psaA and PsaB bind P700, the primary electron donor of photosystem I (PSI), as well as the electron acceptors A0, A1 and FX. PSI is a plastocyanin-ferredoxin oxidoreductase, converting photonic excitation into a charge separation, which transfers an electron from the donor P700 chlorophyll pair to the spectroscopically characterized acceptors A0, A1, FX, FA and FB in turn. Oxidized P700 is reduced on the lumenal side of the thylakoid membrane by plastocyanin. The chain is Photosystem I P700 chlorophyll a apoprotein A1 from Encephalartos lebomboensis (Lebombo cycad).